Reading from the N-terminus, the 110-residue chain is Thiosulfate sulfurtransferase GlpE (110 aa).

Residues 17–105 (KKEGAVVVDI…WRATYPAETA (89 aa)) form the Rhodanese domain. The Cysteine persulfide intermediate role is filled by Cys65.

This sequence belongs to the GlpE family.

It localises to the cytoplasm. It carries out the reaction thiosulfate + hydrogen cyanide = thiocyanate + sulfite + 2 H(+). The catalysed reaction is thiosulfate + [thioredoxin]-dithiol = [thioredoxin]-disulfide + hydrogen sulfide + sulfite + 2 H(+). Functionally, transferase that catalyzes the transfer of sulfur from thiosulfate to thiophilic acceptors such as cyanide or dithiols. May function in a CysM-independent thiosulfate assimilation pathway by catalyzing the conversion of thiosulfate to sulfite, which can then be used for L-cysteine biosynthesis. In Pseudomonas putida (strain ATCC 700007 / DSM 6899 / JCM 31910 / BCRC 17059 / LMG 24140 / F1), this protein is Thiosulfate sulfurtransferase GlpE.